The chain runs to 275 residues: Large ribosomal subunit protein uL2 (275 aa).

Residues 36 to 49 (TQSSTAGRNNNGRI) are compositionally biased toward polar residues. 2 disordered regions span residues 36-59 (TQSS…GGHK) and 224-275 (AMNP…RHKR). Basic residues predominate over residues 50-59 (TTRHKGGGHK).

It belongs to the universal ribosomal protein uL2 family. In terms of assembly, part of the 50S ribosomal subunit. Forms a bridge to the 30S subunit in the 70S ribosome.

Functionally, one of the primary rRNA binding proteins. Required for association of the 30S and 50S subunits to form the 70S ribosome, for tRNA binding and peptide bond formation. It has been suggested to have peptidyltransferase activity; this is somewhat controversial. Makes several contacts with the 16S rRNA in the 70S ribosome. In Burkholderia vietnamiensis (strain G4 / LMG 22486) (Burkholderia cepacia (strain R1808)), this protein is Large ribosomal subunit protein uL2.